A 567-amino-acid chain; its full sequence is Urease subunit alpha (567 aa).

Positions 129–567 (GGIDTHIHWI…LPMAQRYFLF (439 aa)) constitute a Urease domain. Ni(2+)-binding residues include His-134, His-136, and Lys-217. At Lys-217 the chain carries N6-carboxylysine. His-219 provides a ligand contact to substrate. Ni(2+)-binding residues include His-246 and His-272. The Proton donor role is filled by His-320. Asp-360 serves as a coordination point for Ni(2+).

This sequence belongs to the metallo-dependent hydrolases superfamily. Urease alpha subunit family. Heterotrimer of UreA (gamma), UreB (beta) and UreC (alpha) subunits. Three heterotrimers associate to form the active enzyme. The cofactor is Ni cation. In terms of processing, carboxylation allows a single lysine to coordinate two nickel ions.

It localises to the cytoplasm. It carries out the reaction urea + 2 H2O + H(+) = hydrogencarbonate + 2 NH4(+). It participates in nitrogen metabolism; urea degradation; CO(2) and NH(3) from urea (urease route): step 1/1. This chain is Urease subunit alpha, found in Klebsiella pneumoniae (strain 342).